Here is a 245-residue protein sequence, read N- to C-terminus: Probable GTP-binding protein EngB (245 aa).

The region spanning 46-223 (DVPEIAFVGR…AQHLWDWAHP (178 aa)) is the EngB-type G domain. GTP-binding positions include 54-61 (GRSNAGKS), 81-85 (GRTQS), 103-106 (DLPG), 173-176 (TKSD), and 202-204 (FSS). Mg(2+) contacts are provided by Ser61 and Thr83. The interval 219 to 245 (DWAHPPEKPAKKPKAEPAAEAATGDEG) is disordered. Residues 222-235 (HPPEKPAKKPKAEP) are compositionally biased toward basic and acidic residues. Residues 236-245 (AAEAATGDEG) show a composition bias toward low complexity.

It belongs to the TRAFAC class TrmE-Era-EngA-EngB-Septin-like GTPase superfamily. EngB GTPase family. Mg(2+) serves as cofactor.

Its function is as follows. Necessary for normal cell division and for the maintenance of normal septation. The sequence is that of Probable GTP-binding protein EngB from Polaromonas sp. (strain JS666 / ATCC BAA-500).